We begin with the raw amino-acid sequence, 303 residues long: Phosphatidylglycerol--prolipoprotein diacylglyceryl transferase (303 aa).

4 helical membrane passes run 18–38 (LGPFSLRWYGLLIAISVLVGL), 58–78 (LLPILVLASVIGARIYYVAFE), 106–126 (IWGGGIAIHGALIMGTLSIIF), and 133–153 (EPFWDVIDVLVPSVALGQAIG). Arginine 154 contacts a 1,2-diacyl-sn-glycero-3-phospho-(1'-sn-glycerol). The next 3 helical transmembrane spans lie at 193–213 (PTFLYESVWNIFVFGILIFLF), 223–243 (LPPGSLSCLYLITYSLGRFWI), and 266–286 (IAQLISLFLISAGLLGIWRIY).

This sequence belongs to the Lgt family.

The protein localises to the cell inner membrane. It carries out the reaction L-cysteinyl-[prolipoprotein] + a 1,2-diacyl-sn-glycero-3-phospho-(1'-sn-glycerol) = an S-1,2-diacyl-sn-glyceryl-L-cysteinyl-[prolipoprotein] + sn-glycerol 1-phosphate + H(+). It functions in the pathway protein modification; lipoprotein biosynthesis (diacylglyceryl transfer). Its function is as follows. Catalyzes the transfer of the diacylglyceryl group from phosphatidylglycerol to the sulfhydryl group of the N-terminal cysteine of a prolipoprotein, the first step in the formation of mature lipoproteins. This Prochlorococcus marinus (strain NATL1A) protein is Phosphatidylglycerol--prolipoprotein diacylglyceryl transferase.